We begin with the raw amino-acid sequence, 221 residues long: Protein Thf1 (221 aa).

Residues 174–213 are a coiled coil; it reads TKERVEKDVNLYKSSLDKIEKALELIEMNIKDEKRRNKER.

It belongs to the THF1 family.

Its function is as follows. May be involved in photosynthetic membrane biogenesis. In Prochlorococcus marinus (strain MIT 9211), this protein is Protein Thf1.